Reading from the N-terminus, the 94-residue chain is Beta-defensin 132 (94 aa).

Residues 1-22 form the signal peptide; it reads MKFLLLVLAALGFLTQVIPASA. Intrachain disulfides connect cysteine 27/cysteine 55 and cysteine 39/cysteine 56. Residues 72–94 form a disordered region; sequence GNHWQSRRNTQRKDKKQQTTVTS. Basic residues predominate over residues 76–86; the sequence is QSRRNTQRKDK.

It belongs to the beta-defensin family.

Its subcellular location is the secreted. Has antibacterial activity. This is Beta-defensin 132 (DEFB132) from Gorilla gorilla gorilla (Western lowland gorilla).